Reading from the N-terminus, the 589-residue chain is MPTVSVKRDLLFQALGRTYTDEEFDELCFEFGLELDEITSEKEIISKEQGNVKAAGASDVVLYKIDVPANRYDLLCLEGLVRGLQVFKERIKAPVYKRVMPDGKIQKLIITEETAKIRPFAVAAVLRNIKFTKDRYDSFIELQEKLHQNICRKRALVAIGTHDLDTLSGPFTYTAKRPSDIKFKPLNKTKEYTACELMNIYKTDNHLKHYLHIIENKPLYPVIYDSNGVVLSMPPIINGDHSRITVNTRNIFIECTGTDFTKAKIVLDIIVTMFSEYCENQFTVEAAEVVFPNGKSHTFPELAYRKEMVRADLINKKVGIRETPENLAKLLTRMYLKSEVIGDGNQIEIEIPPTRADIIHACDIVEDAAIAYGYSNIQMTLPKTYTIANQFPLNKLTELLRHDMAAAGFTEALTFALCSQEDIADKLGVDISATKAVHISSPKTAEFQVARTTLLPGLLKTIAANRKMPLPLKLFEISDIVIKDSNTDVGAKNYRHLCAVYYNKNPGFEIIHGLLDRIMQLLDVLPGEDKGGYVIKASEGPAFFPGRCAEIFARGQSVGKLGVLHPDVITKFELTMPCSSLEINIGPFL.

The B5 domain occupies 302–379 (LAYRKEMVRA…IAYGYSNIQM (78 aa)). Residues aspartate 357, aspartate 363, glutamate 366, and aspartate 367 each contribute to the Mg(2+) site.

The protein belongs to the phenylalanyl-tRNA synthetase beta subunit family. Type 2 subfamily. As to quaternary structure, heterotetramer; dimer of two heterodimers formed by FARSA and FARSB. Mg(2+) serves as cofactor.

The protein localises to the cytoplasm. The enzyme catalyses tRNA(Phe) + L-phenylalanine + ATP = L-phenylalanyl-tRNA(Phe) + AMP + diphosphate + H(+). The polypeptide is Phenylalanine--tRNA ligase beta subunit (FARSB) (Pongo abelii (Sumatran orangutan)).